The sequence spans 228 residues: Octanoyltransferase (228 aa).

The BPL/LPL catalytic domain maps to 31 to 212 (EETDGILILL…KFEEVFEIKF (182 aa)). Substrate contacts are provided by residues 76-83 (RGGKITFH), 143-145 (AIG), and 156-158 (GIA). Cys174 serves as the catalytic Acyl-thioester intermediate.

The protein belongs to the LipB family.

Its subcellular location is the cytoplasm. The enzyme catalyses octanoyl-[ACP] + L-lysyl-[protein] = N(6)-octanoyl-L-lysyl-[protein] + holo-[ACP] + H(+). The protein operates within protein modification; protein lipoylation via endogenous pathway; protein N(6)-(lipoyl)lysine from octanoyl-[acyl-carrier-protein]: step 1/2. Its function is as follows. Catalyzes the transfer of endogenously produced octanoic acid from octanoyl-acyl-carrier-protein onto the lipoyl domains of lipoate-dependent enzymes. Lipoyl-ACP can also act as a substrate although octanoyl-ACP is likely to be the physiological substrate. This chain is Octanoyltransferase, found in Caldanaerobacter subterraneus subsp. tengcongensis (strain DSM 15242 / JCM 11007 / NBRC 100824 / MB4) (Thermoanaerobacter tengcongensis).